A 129-amino-acid chain; its full sequence is Small ribosomal subunit protein uS11 (129 aa).

Residues Thr108–Lys129 are disordered. Basic residues predominate over residues Pro117 to Lys129.

The protein belongs to the universal ribosomal protein uS11 family. As to quaternary structure, part of the 30S ribosomal subunit. Interacts with proteins S7 and S18. Binds to IF-3.

Functionally, located on the platform of the 30S subunit, it bridges several disparate RNA helices of the 16S rRNA. Forms part of the Shine-Dalgarno cleft in the 70S ribosome. This is Small ribosomal subunit protein uS11 from Mycoplasmopsis synoviae (strain 53) (Mycoplasma synoviae).